Reading from the N-terminus, the 327-residue chain is Ribonucleoside-diphosphate reductase small chain (327 aa).

Positions 70, 101, and 104 each coordinate Fe cation. The active site involves Tyr108. Fe cation is bound by residues Glu164, Glu198, and His201.

This sequence belongs to the ribonucleoside diphosphate reductase small chain family. Heterotetramer composed of a homodimer of the large subunit (R1) and a homodimer of the small subunit (R2). Larger multisubunit protein complex are also active, composed of (R1)n(R2)n. Requires Fe cation as cofactor.

The enzyme catalyses a 2'-deoxyribonucleoside 5'-diphosphate + [thioredoxin]-disulfide + H2O = a ribonucleoside 5'-diphosphate + [thioredoxin]-dithiol. Functionally, ribonucleoside-diphosphate reductase holoenzyme provides the precursors necessary for viral DNA synthesis. Allows virus growth in non-dividing cells. Catalyzes the biosynthesis of deoxyribonucleotides from the corresponding ribonucleotides. This African swine fever virus (isolate Tick/South Africa/Pretoriuskop Pr4/1996) (ASFV) protein is Ribonucleoside-diphosphate reductase small chain.